Consider the following 241-residue polypeptide: Thyroid transcription factor 1-associated protein 26 (241 aa).

Disordered stretches follow at residues Met-1–Val-22 and Lys-182–Lys-205. The segment covering Lys-186–Arg-202 has biased composition (basic and acidic residues).

It belongs to the TAP26 family. In terms of assembly, interacts with NKX2-1. As to expression, ubiquitously expressed. In lung, expression is restricted to the alveolar epithelial cells.

The protein resides in the nucleus. Functionally, component of the transcription complexes of the pulmonary surfactant-associated protein-B (SFTPB) and -C (SFTPC). Enhances homeobox protein Nkx-2.1-activated SFTPB and SFTPC promoter activities. This chain is Thyroid transcription factor 1-associated protein 26 (CCDC59), found in Homo sapiens (Human).